The following is a 103-amino-acid chain: Carboxysome shell protein CsoS1 (103 aa).

A BMC domain is found at A9 to G94.

The protein belongs to the bacterial microcompartments protein family. CsoS1 subfamily. Homohexamer with a small central pore. Forms a CsoS2-CsoS1-RuBisCO complex.

It is found in the carboxysome. Its function is as follows. One of the shell proteins of the carboxysome, a polyhedral inclusion where RuBisCO (ribulose bisphosphate carboxylase, ccbL-ccbS) is sequestered. Assembles into hexamers which make sheets that form the facets of the polyhedral carboxysome. This is Carboxysome shell protein CsoS1 from Prochlorococcus marinus (strain MIT 9313).